A 488-amino-acid chain; its full sequence is ATP-dependent RNA helicase dbp3 (488 aa).

Residues 1–29 show a composition bias toward basic and acidic residues; sequence MAKREHQDQTGDSRPSKKSKGTKDTKKNT. A disordered region spans residues 1-42; that stretch reads MAKREHQDQTGDSRPSKKSKGTKDTKKNTEVSPPYFQSPALD. A Q motif motif is present at residues 92-100; that stretch reads GFASPTAIQ. The 176-residue stretch at 104–279 folds into the Helicase ATP-binding domain; the sequence is WPLLFAGRDV…STFMTSPVTV (176 aa). An ATP-binding site is contributed by 117–124; that stretch reads AETGSGKT. Residues 226–229 carry the DEAD box motif; sequence DEAD. Residues 306–457 form the Helicase C-terminal domain; it reads EKEQRLVQIL…EVPEALLKFG (152 aa).

This sequence belongs to the DEAD box helicase family. DDX5/DBP2 subfamily.

It localises to the nucleus. The protein resides in the nucleolus. It catalyses the reaction ATP + H2O = ADP + phosphate + H(+). Functionally, ATP-dependent RNA helicase required for 60S ribosomal subunit synthesis. Involved in efficient pre-rRNA processing, predominantly at site A3, which is necessary for the normal formation of 25S and 5.8S rRNAs. This chain is ATP-dependent RNA helicase dbp3 (dbp3), found in Emericella nidulans (strain FGSC A4 / ATCC 38163 / CBS 112.46 / NRRL 194 / M139) (Aspergillus nidulans).